Consider the following 108-residue polypeptide: Large ribosomal subunit protein uL22 (108 aa).

This sequence belongs to the universal ribosomal protein uL22 family. In terms of assembly, part of the 50S ribosomal subunit.

In terms of biological role, this protein binds specifically to 23S rRNA; its binding is stimulated by other ribosomal proteins, e.g. L4, L17, and L20. It is important during the early stages of 50S assembly. It makes multiple contacts with different domains of the 23S rRNA in the assembled 50S subunit and ribosome. Its function is as follows. The globular domain of the protein is located near the polypeptide exit tunnel on the outside of the subunit, while an extended beta-hairpin is found that lines the wall of the exit tunnel in the center of the 70S ribosome. This is Large ribosomal subunit protein uL22 from Nitratiruptor sp. (strain SB155-2).